The primary structure comprises 135 residues: Holo-[acyl-carrier-protein] synthase (135 aa).

Asp8 and Glu57 together coordinate Mg(2+).

The protein belongs to the P-Pant transferase superfamily. AcpS family. It depends on Mg(2+) as a cofactor.

The protein resides in the cytoplasm. It catalyses the reaction apo-[ACP] + CoA = holo-[ACP] + adenosine 3',5'-bisphosphate + H(+). In terms of biological role, transfers the 4'-phosphopantetheine moiety from coenzyme A to a Ser of acyl-carrier-protein. In Xanthobacter autotrophicus (strain ATCC BAA-1158 / Py2), this protein is Holo-[acyl-carrier-protein] synthase.